The primary structure comprises 262 residues: Thiamine thiazole synthase (262 aa).

Residues Ser-40, 59–60 (ER), Gly-67, Val-133, and 159–161 (HID) contribute to the NAD(+) site. Fe cation is bound by residues Asp-161 and His-176. Residues Ser-179 and Met-226 each contribute to the NAD(+) site. Residue Arg-236 participates in glycine binding.

It belongs to the THI4 family. In terms of assembly, homooctamer; tetramer of dimers. It depends on Fe(2+) as a cofactor.

The catalysed reaction is hydrogen sulfide + glycine + NAD(+) = ADP-5-ethyl-4-methylthiazole-2-carboxylate + nicotinamide + 3 H2O + H(+). It functions in the pathway cofactor biosynthesis; thiamine diphosphate biosynthesis. Its function is as follows. Involved in the biosynthesis of the thiazole moiety of thiamine. Catalyzes the conversion of NAD and glycine to adenosine diphosphate 5-(2-hydroxyethyl)-4-methylthiazole-2-carboxylate (ADT), an adenylated thiazole intermediate, using free sulfide as a source of sulfur. This is Thiamine thiazole synthase from Methanococcus maripaludis (strain C7 / ATCC BAA-1331).